Reading from the N-terminus, the 161-residue chain is Large ribosomal subunit protein uL15 (161 aa).

The segment at 1 to 43 is disordered; that stretch reads MKLSDIADNAGSRKKRMRIGRGIGSGKGKTGGRGGKGQTARSG. Residues 21–37 are compositionally biased toward gly residues; sequence RGIGSGKGKTGGRGGKG.

The protein belongs to the universal ribosomal protein uL15 family. Part of the 50S ribosomal subunit.

Functionally, binds to the 23S rRNA. This is Large ribosomal subunit protein uL15 from Nitrobacter hamburgensis (strain DSM 10229 / NCIMB 13809 / X14).